Reading from the N-terminus, the 428-residue chain is Glutamate-1-semialdehyde 2,1-aminomutase (428 aa).

An N6-(pyridoxal phosphate)lysine modification is found at K267.

The protein belongs to the class-III pyridoxal-phosphate-dependent aminotransferase family. HemL subfamily. Homodimer. Pyridoxal 5'-phosphate is required as a cofactor.

It is found in the cytoplasm. The enzyme catalyses (S)-4-amino-5-oxopentanoate = 5-aminolevulinate. The protein operates within porphyrin-containing compound metabolism; protoporphyrin-IX biosynthesis; 5-aminolevulinate from L-glutamyl-tRNA(Glu): step 2/2. It participates in porphyrin-containing compound metabolism; chlorophyll biosynthesis. The chain is Glutamate-1-semialdehyde 2,1-aminomutase from Prochlorococcus marinus (strain MIT 9303).